A 462-amino-acid polypeptide reads, in one-letter code: Amino-acid permease AapA (462 aa).

The next 12 membrane-spanning stretches (helical) occupy residues 27-47 (LMAIGGAIGTGLFLGSGKSIH), 48-68 (FAGPSILFAYLITGVFCFFIM), 96-116 (AAFITGWTYWFCWISLAMADL), 134-154 (LPGLLALIILLIMNLATVKLF), 160-180 (WFALIKVIAILALIVTGILLI), 209-229 (GFILSFQMVVFAFVGIELVGL), 252-272 (ILLFYVGALFVIMCIYPWNVL), 279-299 (FVQVFSAVGIVVAASLINFVV), 343-363 (ALFFSSIAILIGVSLNYLMPE), 366-386 (FTLITSVSTICFIFIWGITVI), 410-430 (PLSNYLTLAFLAFILVILALA), and 435-455 (IALFVTPVWFVLLIILYKVQT).

Belongs to the amino acid-polyamine-organocation (APC) superfamily.

The protein resides in the cell membrane. Probable amino-acid or metabolite transport protein. The sequence is that of Amino-acid permease AapA (aapA) from Bacillus subtilis (strain 168).